The sequence spans 340 residues: Dihydroorotate dehydrogenase (quinone) (340 aa).

FMN contacts are provided by residues 62–66 (AGLDK) and threonine 86. Position 66 (lysine 66) interacts with substrate. Position 111 to 115 (111 to 115 (NRMGF)) interacts with substrate. Residues asparagine 139 and asparagine 172 each contribute to the FMN site. Asparagine 172 serves as a coordination point for substrate. Serine 175 (nucleophile) is an active-site residue. Asparagine 177 provides a ligand contact to substrate. 2 residues coordinate FMN: lysine 217 and threonine 245. Residue 246-247 (NT) coordinates substrate. FMN-binding positions include glycine 268, glycine 297, and 318 to 319 (YS).

It belongs to the dihydroorotate dehydrogenase family. Type 2 subfamily. Monomer. Requires FMN as cofactor.

Its subcellular location is the cell membrane. The catalysed reaction is (S)-dihydroorotate + a quinone = orotate + a quinol. It participates in pyrimidine metabolism; UMP biosynthesis via de novo pathway; orotate from (S)-dihydroorotate (quinone route): step 1/1. Catalyzes the conversion of dihydroorotate to orotate with quinone as electron acceptor. The polypeptide is Dihydroorotate dehydrogenase (quinone) (Alkalilimnicola ehrlichii (strain ATCC BAA-1101 / DSM 17681 / MLHE-1)).